The sequence spans 248 residues: Serine/arginine-rich splicing factor 1 (248 aa).

The residue at position 2 (S2) is an N-acetylserine. Position 2 is a phosphoserine (S2). The RRM 1 domain occupies 16 to 91 (CRIYVGNLPP…YRLRVEFPRS (76 aa)). K30 is covalently cross-linked (Glycyl lysine isopeptide (Lys-Gly) (interchain with G-Cter in SUMO2)). Residue K38 is modified to N6-acetyllysine; alternate. K38 is covalently cross-linked (Glycyl lysine isopeptide (Lys-Gly) (interchain with G-Cter in SUMO2); alternate). The segment at 88 to 134 (FPRSGRGTGRGGGGGGGGGAPRGRYGPPSRRSENRVVVSGLPPSGSW) is disordered. Asymmetric dimethylarginine; alternate occurs at positions 93, 97, and 109. Residues R93, R97, and R109 each carry the omega-N-methylarginine; alternate modification. Positions 93-108 (RGTGRGGGGGGGGGAP) are enriched in gly residues. R111 carries the omega-N-methylarginine modification. The RRM 2 domain maps to 121 to 195 (NRVVVSGLPP…ETAYIRVKVD (75 aa)). Residue S133 is modified to Phosphoserine. N6-acetyllysine is present on K179. The disordered stretch occupies residues 191–248 (RVKVDGPRSPSYGRSRSRSRSRSRSRSRSNSRSRSYSPRRSRGSPRYSPRHSRSRSRT). The segment at 198–247 (RSPSYGRSRSRSRSRSRSRSRSNSRSRSYSPRRSRGSPRYSPRHSRSRSR) is interaction with SAFB1. A phosphoserine mark is found at S199 and S201. Y202 is subject to Phosphotyrosine. Phosphoserine occurs at positions 205, 207, 209, 231, 234, and 238. The segment covering 205-248 (SRSRSRSRSRSRSRSNSRSRSYSPRRSRGSPRYSPRHSRSRSRT) has biased composition (basic residues).

It belongs to the splicing factor SR family. As to quaternary structure, consists of two polypeptides of p32 and p33. Identified in the spliceosome C complex. Component of a ribonucleoprotein complex containing mRNAs and RNA-binding proteins including DDX5, HNRNPH2 and SRSF1 as well as splicing regulator ARVCF. In vitro, self-associates and binds SRSF2, SNRNP70 and U2AF1 but not U2AF2. Binds SREK1/SFRS12. Interacts with SAFB/SAFB1. Interacts with PSIP1/LEDGF. Interacts with RSRC1 (via Arg/Ser-rich domain). Interacts with ZRSR2/U2AF1-RS2. Interacts with CCDC55 (via C-terminus). Interacts with SRPK1 and a sliding docking interaction is essential for its sequential and processive phosphorylation by SRPK1. Interacts with NXF1. Interacts with CCNL1, CCNL2 and CDK11B. Interacts with RRP1B. Interacts (when phosphorylated in its RS domain) with TNPO3; promoting nuclear import. Interacts with ILDR1 (via C-terminus) and ILDR2. Post-translationally, phosphorylated by CLK1, CLK2, CLK3 and CLK4. Phosphorylated by SRPK1 at multiple serines in its RS domain via a directional (C-terminal to N-terminal) and a dual-track mechanism incorporating both processive phosphorylation (in which the kinase stays attached to the substrate after each round of phosphorylation) and distributive phosphorylation steps (in which the kinase and substrate dissociate after each phosphorylation event). The RS domain of SRSF1 binds to a docking groove in the large lobe of the kinase domain of SRPK1 and this induces certain structural changes in SRPK1 and/or RRM 2 domain of SRSF1, allowing RRM 2 to bind the kinase and initiate phosphorylation. The cycles continue for several phosphorylation steps in a processive manner (steps 1-8) until the last few phosphorylation steps (approximately steps 9-12). During that time, a mechanical stress induces the unfolding of the beta-4 motif in RRM 2, which then docks at the docking groove of SRPK1. This also signals RRM 2 to begin to dissociate, which facilitates SRSF1 dissociation after phosphorylation is completed. In terms of processing, asymmetrically dimethylated at arginines, probably by PRMT1, methylation promotes localization to nuclear speckles.

The protein localises to the cytoplasm. It is found in the nucleus speckle. In terms of biological role, plays a role in preventing exon skipping, ensuring the accuracy of splicing and regulating alternative splicing. Interacts with other spliceosomal components, via the RS domains, to form a bridge between the 5'- and 3'-splice site binding components, U1 snRNP and U2AF. Can stimulate binding of U1 snRNP to a 5'-splice site-containing pre-mRNA. Binds to purine-rich RNA sequences, either the octamer, 5'-RGAAGAAC-3' (r=A or G) or the decamers, AGGACAGAGC/AGGACGAAGC. Binds preferentially to the 5'-CGAGGCG-3' motif in vitro. Three copies of the octamer constitute a powerful splicing enhancer in vitro, the ASF/SF2 splicing enhancer (ASE) which can specifically activate ASE-dependent splicing. May function as export adapter involved in mRNA nuclear export through the TAP/NXF1 pathway. The sequence is that of Serine/arginine-rich splicing factor 1 (SRSF1) from Bos taurus (Bovine).